Consider the following 449-residue polypeptide: Signal recognition particle protein (449 aa).

GTP contacts are provided by residues Gly-109–Thr-116, Asp-191–Arg-195, and Ser-249–Asp-252.

The protein belongs to the GTP-binding SRP family. SRP54 subfamily. As to quaternary structure, part of the signal recognition particle protein translocation system, which is composed of SRP and FtsY. SRP is a ribonucleoprotein composed of Ffh and a 4.5S RNA molecule.

Its subcellular location is the cytoplasm. It catalyses the reaction GTP + H2O = GDP + phosphate + H(+). In terms of biological role, involved in targeting and insertion of nascent membrane proteins into the cytoplasmic membrane. Binds to the hydrophobic signal sequence of the ribosome-nascent chain (RNC) as it emerges from the ribosomes. The SRP-RNC complex is then targeted to the cytoplasmic membrane where it interacts with the SRP receptor FtsY. Interaction with FtsY leads to the transfer of the RNC complex to the Sec translocase for insertion into the membrane, the hydrolysis of GTP by both Ffh and FtsY, and the dissociation of the SRP-FtsY complex into the individual components. In Rickettsia conorii (strain ATCC VR-613 / Malish 7), this protein is Signal recognition particle protein.